The sequence spans 151 residues: Putative phosphatidylglycerol/phosphatidylinositol transfer protein 1 (151 aa).

An N-terminal signal peptide occupies residues methionine 1 to serine 26.

The protein belongs to the NPC2 family. As to quaternary structure, monomer.

Its function is as follows. Catalyzes the intermembrane transfer of phosphatidylglycerol and phosphatidylinositol. The protein is Putative phosphatidylglycerol/phosphatidylinositol transfer protein 1 of Dictyostelium discoideum (Social amoeba).